The sequence spans 136 residues: MLAPKKQKFRKAHKGRVMSKAKAGMTLAFGSFGLKSIDGWRVTARQIEAGRKAATRCMKRQGRLWIRIFPDVPVSKKPAEVRMGKGKGTPEFFAVRVSPGRIMFEIEGVEENIALRALELASAKLPVRTRIVRRYE.

It belongs to the universal ribosomal protein uL16 family. Part of the 50S ribosomal subunit.

In terms of biological role, binds 23S rRNA and is also seen to make contacts with the A and possibly P site tRNAs. In Rickettsia prowazekii (strain Madrid E), this protein is Large ribosomal subunit protein uL16.